A 332-amino-acid polypeptide reads, in one-letter code: uncharacterized protein (332 aa).

This sequence belongs to the bacterial solute-binding protein 1 family. WtpA subfamily.

This is an uncharacterized protein from Methanococcus maripaludis (strain DSM 14266 / JCM 13030 / NBRC 101832 / S2 / LL).